We begin with the raw amino-acid sequence, 238 residues long: Ribonuclease PH (238 aa).

Phosphate contacts are provided by residues Arg-86 and 124–126 (GTR).

Belongs to the RNase PH family. In terms of assembly, homohexameric ring arranged as a trimer of dimers.

It carries out the reaction tRNA(n+1) + phosphate = tRNA(n) + a ribonucleoside 5'-diphosphate. Its function is as follows. Phosphorolytic 3'-5' exoribonuclease that plays an important role in tRNA 3'-end maturation. Removes nucleotide residues following the 3'-CCA terminus of tRNAs; can also add nucleotides to the ends of RNA molecules by using nucleoside diphosphates as substrates, but this may not be physiologically important. Probably plays a role in initiation of 16S rRNA degradation (leading to ribosome degradation) during starvation. This Yersinia enterocolitica serotype O:8 / biotype 1B (strain NCTC 13174 / 8081) protein is Ribonuclease PH.